Here is a 517-residue protein sequence, read N- to C-terminus: Beta-glucosidase 17 (517 aa).

Residues 1 to 23 (MAIKSIFIIIIISIITSISELYA) form the signal peptide. A beta-D-glucoside is bound by residues Gln54, His158, and 203–204 (NE). Glu204 serves as the catalytic Proton donor. Residues Cys223 and Cys230 are joined by a disulfide bond. Asn229 carries N-linked (GlcNAc...) asparagine glycosylation. Tyr346 lines the a beta-D-glucoside pocket. N-linked (GlcNAc...) asparagine glycosylation is found at Asn361 and Asn371. Residues Glu417, Trp466, 473–474 (EW), and Tyr482 each bind a beta-D-glucoside. Glu417 functions as the Nucleophile in the catalytic mechanism. A glycan (N-linked (GlcNAc...) asparagine) is linked at Asn510.

The protein belongs to the glycosyl hydrolase 1 family.

It carries out the reaction Hydrolysis of terminal, non-reducing beta-D-glucosyl residues with release of beta-D-glucose.. This Arabidopsis thaliana (Mouse-ear cress) protein is Beta-glucosidase 17.